The primary structure comprises 87 residues: Pyocin-S1 immunity protein (87 aa).

Belongs to the colicins ColE2/ColE8/ColE9 and pyocins S1/S2 family.

The sequence is that of Pyocin-S1 immunity protein (imm1) from Pseudomonas aeruginosa.